Consider the following 197-residue polypeptide: Xanthine phosphoribosyltransferase (197 aa).

Residues leucine 20 and threonine 27 each contribute to the xanthine site. 128 to 132 (ANGQA) lines the 5-phospho-alpha-D-ribose 1-diphosphate pocket. Xanthine is bound at residue lysine 156.

This sequence belongs to the purine/pyrimidine phosphoribosyltransferase family. Xpt subfamily. In terms of assembly, homodimer.

It localises to the cytoplasm. The enzyme catalyses XMP + diphosphate = xanthine + 5-phospho-alpha-D-ribose 1-diphosphate. Its pathway is purine metabolism; XMP biosynthesis via salvage pathway; XMP from xanthine: step 1/1. Converts the preformed base xanthine, a product of nucleic acid breakdown, to xanthosine 5'-monophosphate (XMP), so it can be reused for RNA or DNA synthesis. The protein is Xanthine phosphoribosyltransferase of Lactococcus lactis subsp. lactis (strain IL1403) (Streptococcus lactis).